A 108-amino-acid chain; its full sequence is MGVHVETISPGDWRTFPKRSQTCVMHYTGMLEDGKKFDSSRDRNKPFKFMLGKQEVIRGWEEGVVQMSVGQRAKLTISPDYAYGATGHPGIIPPHATLVFDVELLKLE.

Positions 20 to 108 (SQTCVMHYTG…VFDVELLKLE (89 aa)) constitute a PPIase FKBP-type domain.

The protein belongs to the FKBP-type PPIase family. FKBP1 subfamily.

It catalyses the reaction [protein]-peptidylproline (omega=180) = [protein]-peptidylproline (omega=0). In terms of biological role, catalyzes the cis-trans isomerization of proline imidic peptide bonds in oligopeptides. The sequence is that of Peptidyl-prolyl cis-trans isomerase FKBP1C from Homo sapiens (Human).